Here is a 329-residue protein sequence, read N- to C-terminus: Dolichyl-diphosphooligosaccharide--protein glycosyltransferase subunit MAGT1 (329 aa).

A signal peptide spans 1 to 23; sequence MAGLKGLLFGGILFAMCGGLSEG. At 24-178 the chain is on the extracellular side; sequence QKKKEMVLSD…DVNIRVIRPP (155 aa). In terms of domain architecture, Thioredoxin spans 41–169; sequence WASKRPVIRM…LARWVADRTD (129 aa). Asn-65 carries N-linked (GlcNAc...) asparagine glycosylation. Residues Cys-81 and Cys-84 are joined by a disulfide bond. The chain crosses the membrane as a helical span at residues 179 to 199; it reads NYAGPLMLGLLLAVIGGLVYL. Over 200 to 212 the chain is Cytoplasmic; that stretch reads RRSNLDFLNNKTG. Residues 213–233 traverse the membrane as a helical segment; the sequence is WALAALCFVLAMTSGQMWNHI. The Extracellular segment spans residues 234–258; the sequence is RGPPYAHKNPHTNQVNYIHGSSQAQ. Residues 259–279 form a helical membrane-spanning segment; sequence FVAETHIVLLFNGAVTLGMVL. Topologically, residues 280 to 294 are cytoplasmic; it reads LHEAATSDLDVGKRK. A helical membrane pass occupies residues 295–315; that stretch reads IMCIAGITLVVIFFSWLLSVF. At 316–329 the chain is on the extracellular side; that stretch reads RSKYHGYPYSFLMT.

It belongs to the OST3/OST6 family. In terms of assembly, accessory component of the STT3B-containing form of the oligosaccharyltransferase (OST) complex.

The protein resides in the cell membrane. The protein localises to the endoplasmic reticulum. It localises to the endoplasmic reticulum membrane. It participates in protein modification; protein glycosylation. In terms of biological role, accessory component of the STT3B-containing form of the N-oligosaccharyl transferase (OST) complex which catalyzes the transfer of a high mannose oligosaccharide from a lipid-linked oligosaccharide donor to an asparagine residue within an Asn-X-Ser/Thr consensus motif in nascent polypeptide chains. May be involved in substrate-specific N-glycosylation involving acceptor sites that are near cysteine residues. Could indirectly play a role in Mg(2+) transport in epithelial cells. The chain is Dolichyl-diphosphooligosaccharide--protein glycosyltransferase subunit MAGT1 from Xenopus laevis (African clawed frog).